The chain runs to 135 residues: ATP synthase epsilon chain, chloroplastic (135 aa).

This sequence belongs to the ATPase epsilon chain family. As to quaternary structure, F-type ATPases have 2 components, CF(1) - the catalytic core - and CF(0) - the membrane proton channel. CF(1) has five subunits: alpha(3), beta(3), gamma(1), delta(1), epsilon(1). CF(0) has three main subunits: a, b and c.

It localises to the plastid. It is found in the chloroplast thylakoid membrane. Produces ATP from ADP in the presence of a proton gradient across the membrane. The chain is ATP synthase epsilon chain, chloroplastic from Marchantia polymorpha (Common liverwort).